Consider the following 146-residue polypeptide: 3-hydroxyacyl-[acyl-carrier-protein] dehydratase FabZ (146 aa).

His-47 is an active-site residue.

The protein belongs to the thioester dehydratase family. FabZ subfamily.

The protein resides in the cytoplasm. The catalysed reaction is a (3R)-hydroxyacyl-[ACP] = a (2E)-enoyl-[ACP] + H2O. Its function is as follows. Involved in unsaturated fatty acids biosynthesis. Catalyzes the dehydration of short chain beta-hydroxyacyl-ACPs and long chain saturated and unsaturated beta-hydroxyacyl-ACPs. In Methylococcus capsulatus (strain ATCC 33009 / NCIMB 11132 / Bath), this protein is 3-hydroxyacyl-[acyl-carrier-protein] dehydratase FabZ.